The chain runs to 312 residues: Homoserine O-succinyltransferase (312 aa).

The Acyl-thioester intermediate role is filled by C142. Positions 163 and 192 each coordinate substrate. H235 functions as the Proton acceptor in the catalytic mechanism. E237 is an active-site residue. Substrate is bound at residue R249.

The protein belongs to the MetA family.

Its subcellular location is the cytoplasm. It carries out the reaction L-homoserine + succinyl-CoA = O-succinyl-L-homoserine + CoA. Its pathway is amino-acid biosynthesis; L-methionine biosynthesis via de novo pathway; O-succinyl-L-homoserine from L-homoserine: step 1/1. Functionally, transfers a succinyl group from succinyl-CoA to L-homoserine, forming succinyl-L-homoserine. This is Homoserine O-succinyltransferase from Alteromonas mediterranea (strain DSM 17117 / CIP 110805 / LMG 28347 / Deep ecotype).